The following is an 85-amino-acid chain: Phosphocarrier protein HPr (85 aa).

An HPr domain is found at 1–85; the sequence is MFQQEVTITA…HLVKLMAELE (85 aa). The active-site Pros-phosphohistidine intermediate is the His-15.

It belongs to the HPr family.

The protein localises to the cytoplasm. General (non sugar-specific) component of the phosphoenolpyruvate-dependent sugar phosphotransferase system (sugar PTS). This major carbohydrate active-transport system catalyzes the phosphorylation of incoming sugar substrates concomitantly with their translocation across the cell membrane. The phosphoryl group from phosphoenolpyruvate (PEP) is transferred to the phosphoryl carrier protein HPr by enzyme I. Phospho-HPr then transfers it to the PTS EIIA domain. This is Phosphocarrier protein HPr (ptsH) from Escherichia coli O157:H7.